Here is a 212-residue protein sequence, read N- to C-terminus: Thymidylate kinase (212 aa).

Residue 10-17 participates in ATP binding; that stretch reads GPDGAGKT.

It belongs to the thymidylate kinase family.

The enzyme catalyses dTMP + ATP = dTDP + ADP. In terms of biological role, phosphorylation of dTMP to form dTDP in both de novo and salvage pathways of dTTP synthesis. This Exiguobacterium sibiricum (strain DSM 17290 / CCUG 55495 / CIP 109462 / JCM 13490 / 255-15) protein is Thymidylate kinase.